The following is a 397-amino-acid chain: Bifunctional arginine demethylase and lysyl-hydroxylase psr-1 (397 aa).

The region spanning 146 to 310 is the JmjC domain; that stretch reads RKTKKLSEDY…LVWPKTVRGR (165 aa). Thr-189 serves as a coordination point for substrate. Fe cation contacts are provided by His-192 and Asp-194. Asn-202 contacts 2-oxoglutarate. Lys-209 is a substrate binding site. His-278 lines the Fe cation pocket. Position 290 (Thr-290) interacts with 2-oxoglutarate. A compositionally biased stretch (polar residues) spans 334 to 344; it reads SCTDTPPQSLN. Residues 334–383 are disordered; it reads SCTDTPPQSLNDSSSDSSSSSSSSDDSSDSETEEDSGRCGLGNRKRRNDV. Residues 345 to 358 show a composition bias toward low complexity; it reads DSSSDSSSSSSSSD.

This sequence belongs to the JMJD6 family. Interacts with ced-5 and ced-12. Requires Fe(2+) as cofactor.

It localises to the nucleus. Its function is as follows. Dioxygenase that can both act as a histone arginine demethylase and a lysyl-hydroxylase. This chain is Bifunctional arginine demethylase and lysyl-hydroxylase psr-1 (psr-1), found in Caenorhabditis briggsae.